The primary structure comprises 214 residues: Holliday junction branch migration complex subunit RuvA (214 aa).

Residues Met-1–Ala-63 form a domain I region. A domain II region spans residues Asp-64–Gly-139. The flexible linker stretch occupies residues Gly-139–Ser-143. Residues Pro-144–Gly-214 form a domain III region.

It belongs to the RuvA family. As to quaternary structure, homotetramer. Forms an RuvA(8)-RuvB(12)-Holliday junction (HJ) complex. HJ DNA is sandwiched between 2 RuvA tetramers; dsDNA enters through RuvA and exits via RuvB. An RuvB hexamer assembles on each DNA strand where it exits the tetramer. Each RuvB hexamer is contacted by two RuvA subunits (via domain III) on 2 adjacent RuvB subunits; this complex drives branch migration. In the full resolvosome a probable DNA-RuvA(4)-RuvB(12)-RuvC(2) complex forms which resolves the HJ.

The protein localises to the cytoplasm. Functionally, the RuvA-RuvB-RuvC complex processes Holliday junction (HJ) DNA during genetic recombination and DNA repair, while the RuvA-RuvB complex plays an important role in the rescue of blocked DNA replication forks via replication fork reversal (RFR). RuvA specifically binds to HJ cruciform DNA, conferring on it an open structure. The RuvB hexamer acts as an ATP-dependent pump, pulling dsDNA into and through the RuvAB complex. HJ branch migration allows RuvC to scan DNA until it finds its consensus sequence, where it cleaves and resolves the cruciform DNA. This is Holliday junction branch migration complex subunit RuvA from Renibacterium salmoninarum (strain ATCC 33209 / DSM 20767 / JCM 11484 / NBRC 15589 / NCIMB 2235).